Here is a 943-residue protein sequence, read N- to C-terminus: Isoleucine--tRNA ligase (943 aa).

The 'HIGH' region motif lies at P58–H68. E567 lines the L-isoleucyl-5'-AMP pocket. The short motif at K608–S612 is the 'KMSKS' region element. Residue K611 participates in ATP binding. Zn(2+) contacts are provided by C906, C909, C926, and C929.

This sequence belongs to the class-I aminoacyl-tRNA synthetase family. IleS type 1 subfamily. As to quaternary structure, monomer. Requires Zn(2+) as cofactor.

It is found in the cytoplasm. The catalysed reaction is tRNA(Ile) + L-isoleucine + ATP = L-isoleucyl-tRNA(Ile) + AMP + diphosphate. Functionally, catalyzes the attachment of isoleucine to tRNA(Ile). As IleRS can inadvertently accommodate and process structurally similar amino acids such as valine, to avoid such errors it has two additional distinct tRNA(Ile)-dependent editing activities. One activity is designated as 'pretransfer' editing and involves the hydrolysis of activated Val-AMP. The other activity is designated 'posttransfer' editing and involves deacylation of mischarged Val-tRNA(Ile). The chain is Isoleucine--tRNA ligase from Azotobacter vinelandii (strain DJ / ATCC BAA-1303).